A 215-amino-acid polypeptide reads, in one-letter code: Probable GTP-binding protein EngB (215 aa).

Residues 31–215 form the EngB-type G domain; sequence GPPEIAFAGR…RAAILQAIAV (185 aa). GTP contacts are provided by residues 39–46, 66–70, 93–96, 160–163, and 194–196; these read GRSNVGKS, GRTQE, DMPG, TKSD, and TSS. Ser-46 and Thr-68 together coordinate Mg(2+).

Belongs to the TRAFAC class TrmE-Era-EngA-EngB-Septin-like GTPase superfamily. EngB GTPase family. Requires Mg(2+) as cofactor.

Its function is as follows. Necessary for normal cell division and for the maintenance of normal septation. The polypeptide is Probable GTP-binding protein EngB (Bartonella quintana (strain Toulouse) (Rochalimaea quintana)).